A 263-amino-acid polypeptide reads, in one-letter code: Lens fiber major intrinsic protein (263 aa).

The Cytoplasmic segment spans residues 1 to 9 (MWELRSASF). A helical transmembrane segment spans residues 10–29 (WRAIFAEFFATLFYVFFGLG). The Extracellular portion of the chain corresponds to 30 to 41 (ASLRWAPGPLHV). The chain crosses the membrane as a helical span at residues 42–59 (LQVALAFGLALATLVQTV). The Cytoplasmic portion of the chain corresponds to 60–61 (GH). The segment at residues 62-77 (ISGAHVNPAVTFAFLV) is an intramembrane region (discontinuously helical). An NPA 1 motif is present at residues 68–70 (NPA). Over 78 to 82 (GSQMS) the chain is Cytoplasmic. The helical transmembrane segment at 83-106 (LLRAFCYIAAQLLGAVAGAAVLYS) threads the bilayer. Residues 107–127 (VTPPAVRGNLALNTLHAGVSV) lie on the Extracellular side of the membrane. A helical transmembrane segment spans residues 128 to 148 (GQATTVEIFLTLQFVLCIFAT). Residues 149 to 156 (YDERRNGR) lie on the Cytoplasmic side of the membrane. The chain crosses the membrane as a helical span at residues 157-175 (MGSVALAVGFSLTLGHLFG). Topologically, residues 176–178 (MYY) are extracellular. The discontinuously helical intramembrane region spans 179-193 (TGAGMNPARSFAPAI). Positions 184-186 (NPA) match the NPA 2 motif. Residues 194–200 (LTRNFSN) are Extracellular-facing. Residues 201 to 222 (HWVYWVGPIIGGGLGSLLYDFL) traverse the membrane as a helical segment. The Cytoplasmic segment spans residues 223–263 (LFPRLKSVSERLSILKGARPSDSNGQPEGTGEPVELKTQAL). Residues 227 to 237 (LKSVSERLSIL) form an interaction with CALM region. Residues Ser-235, Ser-243, and Ser-245 each carry the phosphoserine modification. The interval 240-263 (ARPSDSNGQPEGTGEPVELKTQAL) is disordered. A Deamidated asparagine modification is found at Asn-246.

The protein belongs to the MIP/aquaporin (TC 1.A.8) family. As to quaternary structure, homotetramer; each monomer provides an independent water pore. Two homotetramers on opposing membranes can dimerize, forming a cell-cell junction. Interacts with CALM; the calcium-calmodulin/CALM complex interacts with the cytoplasmic domains of two aquaporins, leading to channel closure. Interacts with BFSP1 (via C-terminus); prevents calcium-dependent inhibition of the water channel activity. Subject to partial proteolytic cleavage in the eye lens core. Partial proteolysis promotes interactions between tetramers from adjoining membranes. In terms of processing, fatty acylated at Met-1 and Lys-238. The acyl modifications, in decreasing order of ion abundance, are: oleoyl (C18:1) &gt; palmitoyl (C16:0) &gt; stearoyl (C18:0) &gt; eicosenoyl (C20:1) &gt; dihomo-gamma-linolenoyl (C20:3) &gt; palmitoleoyl (C16:1) &gt; eicosadienoyl (C20:2).

The protein resides in the cell membrane. Its subcellular location is the cell junction. It carries out the reaction H2O(in) = H2O(out). The water channel activity is inhibited by calcium through calmodulin/CALM. Aquaporins form homotetrameric transmembrane channels, with each monomer independently mediating water transport across the plasma membrane along its osmotic gradient. Specifically expressed in lens fiber cells, this aquaporin is crucial for maintaining lens water homeostasis and transparency. Beyond water permeability, it also acts as a cell-to-cell adhesion molecule, forming thin junctions between lens fiber cells that are essential for maintaining the ordered structure and transparency of the lens. This chain is Lens fiber major intrinsic protein, found in Mus musculus (Mouse).